The primary structure comprises 361 residues: [LysW]-lysine hydrolase (361 aa).

H67 is a binding site for Zn(2+). Residue D69 is part of the active site. Position 91 (D91) interacts with Zn(2+). The Proton acceptor role is filled by E124. Zn(2+) contacts are provided by E125, E148, and H326.

Belongs to the peptidase M20A family. LysK subfamily. It depends on Zn(2+) as a cofactor. Co(2+) serves as cofactor.

It is found in the cytoplasm. It carries out the reaction [amino-group carrier protein]-C-terminal-gamma-(L-lysyl)-L-glutamate + H2O = [amino-group carrier protein]-C-terminal-L-glutamate + L-lysine. It participates in amino-acid biosynthesis; L-lysine biosynthesis via AAA pathway; L-lysine from L-alpha-aminoadipate (Thermus route): step 5/5. Its function is as follows. Catalyzes the release of L-lysine from [LysW]-gamma-L-lysine. In Thermus thermophilus (strain ATCC 27634 / DSM 579 / HB8), this protein is [LysW]-lysine hydrolase.